A 189-amino-acid polypeptide reads, in one-letter code: GMP synthase [glutamine-hydrolyzing] subunit A (189 aa).

A Glutamine amidotransferase type-1 domain is found at 1-189; that stretch reads MIVILNNGGQ…CKKCGFEFEE (189 aa). The Nucleophile role is filled by Cys76. Residues His163 and Glu165 contribute to the active site.

In terms of assembly, heterodimer composed of a glutamine amidotransferase subunit (A) and a GMP-binding subunit (B).

The enzyme catalyses XMP + L-glutamine + ATP + H2O = GMP + L-glutamate + AMP + diphosphate + 2 H(+). Its pathway is purine metabolism; GMP biosynthesis; GMP from XMP (L-Gln route): step 1/1. Its function is as follows. Catalyzes the synthesis of GMP from XMP. The protein is GMP synthase [glutamine-hydrolyzing] subunit A of Methanococcus maripaludis (strain C5 / ATCC BAA-1333).